The sequence spans 851 residues: Beta-galactosidase BoGH2A (851 aa).

Residues 1-19 form the signal peptide; it reads MMIGKLKYLMLGGCLILGS. Cys-20 carries the N-palmitoyl cysteine lipid modification. Cys-20 carries S-diacylglycerol cysteine lipidation. The Proton donor role is filled by Glu-437. The active-site Nucleophile is Glu-544.

The protein belongs to the glycosyl hydrolase 2 family.

It localises to the cell inner membrane. It carries out the reaction Hydrolysis of terminal non-reducing beta-D-galactose residues in beta-D-galactosides.. The protein operates within glucan metabolism; xyloglucan degradation. In terms of biological role, catalyzes the hydrolysis of terminal non-reducing beta-D-galactose residues in beta-D-galactosides in xyloglucan degradation, converting 'L' units to 'X' units. In Bacteroides ovatus (strain ATCC 8483 / DSM 1896 / JCM 5824 / BCRC 10623 / CCUG 4943 / NCTC 11153), this protein is Beta-galactosidase BoGH2A.